A 99-amino-acid polypeptide reads, in one-letter code: Teretoxin Tsu6.4 (99 aa).

A signal peptide spans 1 to 21; the sequence is MRLLLILVLLTPVIVAFSVDE. Residues 22–53 constitute a propeptide that is removed on maturation; that stretch reads ELNNADGANAASFTADQEVRHKRNLFPAIARR.

Post-translationally, contains 3 disulfide bonds. As to expression, expressed by the venom duct.

The protein resides in the secreted. The protein is Teretoxin Tsu6.4 of Terebra subulata (Chocolate spotted auger).